Here is a 482-residue protein sequence, read N- to C-terminus: 2-succinylbenzoate--CoA ligase (482 aa).

It belongs to the ATP-dependent AMP-binding enzyme family. MenE subfamily.

It carries out the reaction 2-succinylbenzoate + ATP + CoA = 2-succinylbenzoyl-CoA + AMP + diphosphate. Its pathway is quinol/quinone metabolism; 1,4-dihydroxy-2-naphthoate biosynthesis; 1,4-dihydroxy-2-naphthoate from chorismate: step 5/7. The protein operates within quinol/quinone metabolism; menaquinone biosynthesis. Its function is as follows. Converts 2-succinylbenzoate (OSB) to 2-succinylbenzoyl-CoA (OSB-CoA). The chain is 2-succinylbenzoate--CoA ligase from Bacillus cereus (strain ZK / E33L).